Consider the following 282-residue polypeptide: Ribosome-inactivating protein bryodin II (282 aa).

Positions 1–21 are cleaved as a signal peptide; that stretch reads MRSIGFYSVLALYVGAHVTED. The N-linked (GlcNAc...) asparagine glycan is linked to asparagine 25. The active site involves glutamate 183.

Belongs to the ribosome-inactivating protein family. Type 1 RIP subfamily.

It catalyses the reaction Endohydrolysis of the N-glycosidic bond at one specific adenosine on the 28S rRNA.. Ribosome-inactivating protein of type 1, inhibits protein synthesis in animal cells. This chain is Ribosome-inactivating protein bryodin II, found in Bryonia dioica (Red bryony).